We begin with the raw amino-acid sequence, 449 residues long: Tubulin alpha chain (449 aa).

Glutamine 11 is a binding site for GTP. N6-acetyllysine is present on lysine 40. GTP contacts are provided by glutamate 71, serine 140, glycine 144, threonine 145, threonine 179, asparagine 206, and asparagine 228. Residue glutamate 71 participates in Mg(2+) binding. The active site involves glutamate 254.

The protein belongs to the tubulin family. Dimer of alpha and beta chains. A typical microtubule is a hollow water-filled tube with an outer diameter of 25 nm and an inner diameter of 15 nM. Alpha-beta heterodimers associate head-to-tail to form protofilaments running lengthwise along the microtubule wall with the beta-tubulin subunit facing the microtubule plus end conferring a structural polarity. Microtubules usually have 13 protofilaments but different protofilament numbers can be found in some organisms and specialized cells. Mg(2+) is required as a cofactor. In terms of processing, undergoes a tyrosination/detyrosination cycle, the cyclic removal and re-addition of a C-terminal tyrosine residue by the enzymes tubulin tyrosine carboxypeptidase (TTCP) and tubulin tyrosine ligase (TTL), respectively. Acetylation of alpha chains at Lys-40 stabilizes microtubules and affects affinity and processivity of microtubule motors. This modification has a role in multiple cellular functions, ranging from cell motility, cell cycle progression or cell differentiation to intracellular trafficking and signaling.

It is found in the cytoplasm. It localises to the cytoskeleton. It catalyses the reaction GTP + H2O = GDP + phosphate + H(+). Tubulin is the major constituent of microtubules, a cylinder consisting of laterally associated linear protofilaments composed of alpha- and beta-tubulin heterodimers. Microtubules grow by the addition of GTP-tubulin dimers to the microtubule end, where a stabilizing cap forms. Below the cap, tubulin dimers are in GDP-bound state, owing to GTPase activity of alpha-tubulin. The protein is Tubulin alpha chain of Tetrahymena pyriformis.